The sequence spans 214 residues: Adenylate kinase (214 aa).

Residue 10–15 (GAGKGT) participates in ATP binding. Residues 30 to 59 (STGDMLRAAVKAGTPLGLEAKKVMDAGQLV) are NMP. Residues T31, R36, 57–59 (QLV), 85–88 (GFPR), and Q92 each bind AMP. The LID stretch occupies residues 122 to 159 (GRRVHPGSGRVYHIVFNQPKVEGKDDVTGEDLAIRPDD). ATP-binding positions include R123 and 132–133 (VY). The AMP site is built by R156 and R167. Q200 provides a ligand contact to ATP.

The protein belongs to the adenylate kinase family. Monomer.

The protein localises to the cytoplasm. The catalysed reaction is AMP + ATP = 2 ADP. Its pathway is purine metabolism; AMP biosynthesis via salvage pathway; AMP from ADP: step 1/1. Functionally, catalyzes the reversible transfer of the terminal phosphate group between ATP and AMP. Plays an important role in cellular energy homeostasis and in adenine nucleotide metabolism. The polypeptide is Adenylate kinase (Shewanella halifaxensis (strain HAW-EB4)).